Here is a 545-residue protein sequence, read N- to C-terminus: CTP synthase (545 aa).

The tract at residues 1–266 (MATNYIFVTG…DDFVCERFRL (266 aa)) is amidoligase domain. Ser-14 is a binding site for CTP. Ser-14 is a UTP binding site. ATP contacts are provided by residues 15–20 (SLGKGI) and Asp-72. The Mg(2+) site is built by Asp-72 and Glu-140. CTP contacts are provided by residues 147–149 (DIE), 187–192 (KTKPTQ), and Lys-223. UTP-binding positions include 187–192 (KTKPTQ) and Lys-223. Residue 239–241 (KDV) coordinates ATP. A Glutamine amidotransferase type-1 domain is found at 291–542 (TIGMVGKYTE…VKAAYENHKK (252 aa)). Gly-352 is an L-glutamine binding site. Cys-379 acts as the Nucleophile; for glutamine hydrolysis in catalysis. L-glutamine contacts are provided by residues 380-383 (LGMQ), Glu-403, and Arg-470. Active-site residues include His-515 and Glu-517.

This sequence belongs to the CTP synthase family. In terms of assembly, homotetramer.

The enzyme catalyses UTP + L-glutamine + ATP + H2O = CTP + L-glutamate + ADP + phosphate + 2 H(+). It catalyses the reaction L-glutamine + H2O = L-glutamate + NH4(+). It carries out the reaction UTP + NH4(+) + ATP = CTP + ADP + phosphate + 2 H(+). Its pathway is pyrimidine metabolism; CTP biosynthesis via de novo pathway; CTP from UDP: step 2/2. With respect to regulation, allosterically activated by GTP, when glutamine is the substrate; GTP has no effect on the reaction when ammonia is the substrate. The allosteric effector GTP functions by stabilizing the protein conformation that binds the tetrahedral intermediate(s) formed during glutamine hydrolysis. Inhibited by the product CTP, via allosteric rather than competitive inhibition. Functionally, catalyzes the ATP-dependent amination of UTP to CTP with either L-glutamine or ammonia as the source of nitrogen. Regulates intracellular CTP levels through interactions with the four ribonucleotide triphosphates. The sequence is that of CTP synthase from Haemophilus influenzae (strain ATCC 51907 / DSM 11121 / KW20 / Rd).